A 133-amino-acid chain; its full sequence is MAKEFGRPQRVAQEMQKEIAIILQREIKDPRLGMMTTVSGVEMSRDLAYAKVFVTFLNDKDEDAVKAGIKALQEASGFIRSLLGKAMRLRIVPELTFFYDNSLVEGMRMSNLVTNVVKHDEERRVNPDDNKED.

Belongs to the RbfA family. Monomer. Binds 30S ribosomal subunits, but not 50S ribosomal subunits or 70S ribosomes.

The protein localises to the cytoplasm. One of several proteins that assist in the late maturation steps of the functional core of the 30S ribosomal subunit. Associates with free 30S ribosomal subunits (but not with 30S subunits that are part of 70S ribosomes or polysomes). Required for efficient processing of 16S rRNA. May interact with the 5'-terminal helix region of 16S rRNA. The chain is Ribosome-binding factor A from Salmonella schwarzengrund (strain CVM19633).